Reading from the N-terminus, the 82-residue chain is Histidine-rich protein (82 aa).

This is Histidine-rich protein from Plasmodium falciparum (isolate fcm17 / Senegal).